The sequence spans 457 residues: Adenylosuccinate synthetase isozyme 2 A (457 aa).

GTP contacts are provided by residues 40-46 (GDEGKGK) and 68-70 (GHT). Catalysis depends on aspartate 41, which acts as the Proton acceptor. Residues aspartate 41 and glycine 68 each contribute to the Mg(2+) site. Aspartate 41 contacts substrate. Residues 41-44 (DEGK), 66-69 (NAGH), threonine 163, arginine 177, asparagine 256, threonine 271, and arginine 335 each bind IMP. Catalysis depends on histidine 69, which acts as the Proton donor. 331–337 (VTTGRKR) provides a ligand contact to substrate. GTP-binding positions include arginine 337, 363–365 (KLD), and 445–448 (GVGK).

Belongs to the adenylosuccinate synthetase family. As to quaternary structure, homodimer. Mg(2+) serves as cofactor.

The protein resides in the cytoplasm. The protein localises to the mitochondrion. The catalysed reaction is IMP + L-aspartate + GTP = N(6)-(1,2-dicarboxyethyl)-AMP + GDP + phosphate + 2 H(+). It participates in purine metabolism; AMP biosynthesis via de novo pathway; AMP from IMP: step 1/2. With respect to regulation, inhibited competitively by AMP and IMP and non-competitively by fructose 1,6-bisphosphate. Functionally, plays an important role in the de novo pathway and in the salvage pathway of purine nucleotide biosynthesis. Catalyzes the first committed step in the biosynthesis of AMP from IMP. This Xenopus tropicalis (Western clawed frog) protein is Adenylosuccinate synthetase isozyme 2 A (adss2-a).